A 300-amino-acid polypeptide reads, in one-letter code: MCSKTSSVSYGNREDDDNYSSLCPKKQKHNNGGKKRVPRRGPGVAELEKIRLGEQHISTAAPFTLHHPPSLEKSPTITDRTGLVYPFSSYFSAGSFPSDLIPPAPVFQRKHDSSLHYLPPMNLPKQGSGGFYQFIEPPSSQTSSLDNVTKFLDEEKISSAKRPWHFMADTAKCSVGPSTTISRDAKQTRSLDLRLKNHVQDSGTTIRNPITIDSPSSASPPTTIFANPSLGFPRFLQKEEDDHEIIQRKSGTNFPLNKKPFYSFLPANDQIIRDQDRSFSLRTERYDTVPDHGIDLRLKL.

Positions 1–10 (MCSKTSSVSY) are enriched in polar residues. Residues 1–45 (MCSKTSSVSYGNREDDDNYSSLCPKKQKHNNGGKKRVPRRGPGVA) form a disordered region. Residues 25 to 39 (KKQKHNNGGKKRVPR) show a composition bias toward basic residues. The SPL signature appears at 40–48 (RGPGVAELE). The short motif at 294–300 (IDLRLKL) is the EAR element.

In terms of assembly, interacts with SPL and SPEAR2. Expressed in leaves.

Its function is as follows. Adapter-like transcriptional repressor recruiting TPL/TPR coepressors to inhibit TCP transcription factors. May be involved in leaf development. This Arabidopsis thaliana (Mouse-ear cress) protein is Protein SPEAR4.